Reading from the N-terminus, the 91-residue chain is uncharacterized protein (91 aa).

The next 3 membrane-spanning stretches (helical) occupy residues 6–26, 37–57, and 68–88; these read AAAV…INFF, MPVF…FVSI, and IVLN…GALL.

Its subcellular location is the cell membrane. This is an uncharacterized protein from Bacillus subtilis (strain 168).